Reading from the N-terminus, the 472-residue chain is Ribosomal RNA small subunit methyltransferase F (472 aa).

S-adenosyl-L-methionine is bound by residues 123-129 (AAAPGSK), E147, D174, and D192. C245 functions as the Nucleophile in the catalytic mechanism.

It belongs to the class I-like SAM-binding methyltransferase superfamily. RsmB/NOP family.

The protein localises to the cytoplasm. The catalysed reaction is cytidine(1407) in 16S rRNA + S-adenosyl-L-methionine = 5-methylcytidine(1407) in 16S rRNA + S-adenosyl-L-homocysteine + H(+). Specifically methylates the cytosine at position 1407 (m5C1407) of 16S rRNA. In Vibrio vulnificus (strain CMCP6), this protein is Ribosomal RNA small subunit methyltransferase F.